A 668-amino-acid polypeptide reads, in one-letter code: Trehalase (668 aa).

The interval 1 to 23 is disordered; it reads MVLQQTEPTDGADRKASDGPLTV.

This sequence belongs to the glycosyl hydrolase 15 family. In terms of assembly, homomultimer of 20 or more subunits. Mg(2+) is required as a cofactor. Phosphate serves as cofactor.

It carries out the reaction alpha,alpha-trehalose + H2O = alpha-D-glucose + beta-D-glucose. It participates in glycan degradation; trehalose degradation; D-glucose from alpha,alpha-trehalose: step 1/1. Its activity is regulated as follows. Inhibited by pyrophosphate and polyphosphates. Also competitively inhibited by validoxylamine and castanospermine, but not by trehazolin. Catalyzes the hydrolysis of alpha,alpha-trehalose into two molecules of D-glucose. Does not hydrolyze maltose, isomaltose, sucrose, cellobiose, p-nitrophenyl-alpha-D-glucopyranoside, and methyl-alpha-D-glucopyranoside. Is also inactive on alpha,beta-trehalose, beta,beta-trehalose, alpha,alpha-trehalose-6,6'-dibehenate, trehalulose, nigerose, and trehalose dimycolate. This Mycolicibacterium smegmatis (strain ATCC 700084 / mc(2)155) (Mycobacterium smegmatis) protein is Trehalase.